A 1706-amino-acid chain; its full sequence is Probable ATP-dependent RNA helicase DDX60-like (1706 aa).

Positions 545–580 (RPKEDSSGASGEILQNTKPHQITKKSKKKSFLKEDQ) are disordered. The segment covering 551 to 564 (SGASGEILQNTKPH) has biased composition (polar residues). Residues 565 to 574 (QITKKSKKKS) show a composition bias toward basic residues. Positions 752–919 (LDVVDKNESA…WLQSVKQYWK (168 aa)) constitute a Helicase ATP-binding domain. 765-772 (APTSSGKT) serves as a coordination point for ATP. A DEAH box motif is present at residues 869 to 872 (DEVH). Residues 1205 to 1354 (DVKALHTEIT…QFPLSITLVL (150 aa)) enclose the Helicase C-terminal domain.

This sequence belongs to the helicase family.

The enzyme catalyses ATP + H2O = ADP + phosphate + H(+). This Homo sapiens (Human) protein is Probable ATP-dependent RNA helicase DDX60-like.